We begin with the raw amino-acid sequence, 207 residues long: Uracil phosphoribosyltransferase (207 aa).

5-phospho-alpha-D-ribose 1-diphosphate is bound by residues R77, R102, and 129–137 (DPMLATGGS). Residues I192 and 197–199 (GDA) contribute to the uracil site. D198 contributes to the 5-phospho-alpha-D-ribose 1-diphosphate binding site.

This sequence belongs to the UPRTase family. Mg(2+) serves as cofactor.

The catalysed reaction is UMP + diphosphate = 5-phospho-alpha-D-ribose 1-diphosphate + uracil. It functions in the pathway pyrimidine metabolism; UMP biosynthesis via salvage pathway; UMP from uracil: step 1/1. Its activity is regulated as follows. Allosterically activated by GTP. Catalyzes the conversion of uracil and 5-phospho-alpha-D-ribose 1-diphosphate (PRPP) to UMP and diphosphate. The chain is Uracil phosphoribosyltransferase from Ureaplasma urealyticum serovar 10 (strain ATCC 33699 / Western).